A 415-amino-acid polypeptide reads, in one-letter code: Probable N-acetyl-gamma-glutamyl-phosphate reductase, chloroplastic (415 aa).

The N-terminal 74 residues, 1-74 (MGSTALGGGA…SGVKSGEEVR (74 aa)), are a transit peptide targeting the chloroplast. Residues 48 to 68 (VRASVASSPQKQHSPKTSGVK) are disordered. A compositionally biased stretch (polar residues) spans 56 to 67 (PQKQHSPKTSGV). Residue Cys-219 is part of the active site.

It belongs to the NAGSA dehydrogenase family. Type 1 subfamily. Homotetramer.

Its subcellular location is the plastid. The protein localises to the chloroplast. It catalyses the reaction N-acetyl-L-glutamate 5-semialdehyde + phosphate + NADP(+) = N-acetyl-L-glutamyl 5-phosphate + NADPH + H(+). It participates in amino-acid biosynthesis; L-arginine biosynthesis; N(2)-acetyl-L-ornithine from L-glutamate: step 3/4. The chain is Probable N-acetyl-gamma-glutamyl-phosphate reductase, chloroplastic from Oryza sativa subsp. japonica (Rice).